A 134-amino-acid chain; its full sequence is Large ribosomal subunit protein mL41 (134 aa).

The N-terminal 13 residues, 1-13 (MGFLTAVTQGLVR), are a transit peptide targeting the mitochondrion.

It belongs to the mitochondrion-specific ribosomal protein mL41 family. As to quaternary structure, component of the mitochondrial ribosome large subunit (39S) which comprises a 16S rRNA and about 50 distinct proteins. Interacts with BCL2. Was also identified in the 28S mitochondrial ribosome.

Its subcellular location is the mitochondrion. Functionally, component of the mitochondrial ribosome large subunit. Also involved in apoptosis and cell cycle. Enhances p53/TP53 stability, thereby contributing to p53/TP53-induced apoptosis in response to growth-inhibitory condition. Enhances p53/TP53 translocation to the mitochondria. Has the ability to arrest the cell cycle at the G1 phase, possibly by stabilizing the CDKN1A and CDKN1B (p27Kip1) proteins. In Rattus norvegicus (Rat), this protein is Large ribosomal subunit protein mL41 (Mrpl41).